The chain runs to 437 residues: MTGRTVTVVGAGLAGAEAAWQAARRGIKVKLYEMRPEKLTPAHRSGYFAELVCSNSLRAAALENAVGLLKEEMRHLDSLVMACADVTSVPAGGALAVDRDLFARCVTERIAGNPLIEICREEVTAIPEGEAVIIATGPLTSDALASDISRFTGENCLFFYDAVAPIVAAESINMGKVFRSSRYGKGEAAYLNCPLSREEYEVFWEALVKAEKAPRKEFEKELHFEGCMPVEVLAARGKETLLYGPMKPVGLIDPRTGRRPYAVVQLRQENAAATLFNMVGFQTGLKWDEQKRVFRLIPGLEEAEFVRFGVMHRNTFINSPVLLHPTFQTRKNPALFFAGQITGVEGYVESAASGLMAGINAARLLAGKEPLVFPRNTAHGSLAHYITAADPAHFQPMNINFGLFPPFEARIRDKKERYRTVAKKALESIDRFKETLL.

10-15 (GAGLAG) contributes to the FAD binding site.

It belongs to the MnmG family. TrmFO subfamily. FAD serves as cofactor.

The protein localises to the cytoplasm. It carries out the reaction uridine(54) in tRNA + (6R)-5,10-methylene-5,6,7,8-tetrahydrofolate + NADH + H(+) = 5-methyluridine(54) in tRNA + (6S)-5,6,7,8-tetrahydrofolate + NAD(+). The enzyme catalyses uridine(54) in tRNA + (6R)-5,10-methylene-5,6,7,8-tetrahydrofolate + NADPH + H(+) = 5-methyluridine(54) in tRNA + (6S)-5,6,7,8-tetrahydrofolate + NADP(+). In terms of biological role, catalyzes the folate-dependent formation of 5-methyl-uridine at position 54 (M-5-U54) in all tRNAs. In Pelotomaculum thermopropionicum (strain DSM 13744 / JCM 10971 / SI), this protein is Methylenetetrahydrofolate--tRNA-(uracil-5-)-methyltransferase TrmFO.